We begin with the raw amino-acid sequence, 242 residues long: Ubiquinone biosynthesis O-methyltransferase (242 aa).

Positions 44, 64, 85, and 129 each coordinate S-adenosyl-L-methionine.

The protein belongs to the methyltransferase superfamily. UbiG/COQ3 family.

The catalysed reaction is a 3-demethylubiquinol + S-adenosyl-L-methionine = a ubiquinol + S-adenosyl-L-homocysteine + H(+). It catalyses the reaction a 3-(all-trans-polyprenyl)benzene-1,2-diol + S-adenosyl-L-methionine = a 2-methoxy-6-(all-trans-polyprenyl)phenol + S-adenosyl-L-homocysteine + H(+). Its pathway is cofactor biosynthesis; ubiquinone biosynthesis. In terms of biological role, O-methyltransferase that catalyzes the 2 O-methylation steps in the ubiquinone biosynthetic pathway. In Salmonella agona (strain SL483), this protein is Ubiquinone biosynthesis O-methyltransferase.